The chain runs to 597 residues: DNA ligase (597 aa).

Glu-262 contacts ATP. Lys-264 (N6-AMP-lysine intermediate) is an active-site residue. The ATP site is built by Arg-269, Arg-284, Glu-314, Phe-354, Arg-431, and Lys-437.

This sequence belongs to the ATP-dependent DNA ligase family. Mg(2+) is required as a cofactor. Mn(2+) serves as cofactor.

The enzyme catalyses ATP + (deoxyribonucleotide)n-3'-hydroxyl + 5'-phospho-(deoxyribonucleotide)m = (deoxyribonucleotide)n+m + AMP + diphosphate.. The catalysed reaction is ADP + (deoxyribonucleotide)n-3'-hydroxyl + 5'-phospho-(deoxyribonucleotide)m = (deoxyribonucleotide)n+m + AMP + phosphate.. It carries out the reaction GTP + (deoxyribonucleotide)n-3'-hydroxyl + 5'-phospho-(deoxyribonucleotide)m = (deoxyribonucleotide)n+m + GMP + diphosphate.. Its activity is regulated as follows. Inhibited by Ca(2+) and Zn(2+). Its function is as follows. DNA ligase that seals nicks in double-stranded DNA during DNA replication, DNA recombination and DNA repair. Can use both ATP and ADP. This chain is DNA ligase, found in Staphylothermus marinus (strain ATCC 43588 / DSM 3639 / JCM 9404 / F1).